The primary structure comprises 262 residues: MDKRWSLQGMTALVTGAASGIGYAIVEELASFGAIIHICDISETLLSQSLSEWEKKGFQVSGSICDVASRPDREKLMQTVSSLFDGKLNILVNNVGVIRGKPTTEYVAEDFSYHISTNLEPAFHFSQLSHLLLKASGFGSIVFMSSATGVVSVQCGSIYSLTKGALNQLTRNLACEWAKDGIRANAVAPNVVKTPLSQSYLEDVGFKEALFSRTPLGRAGEPNEVASLVVFLCLPAASYITGQTICIDGGFTVNAFSYKPQA.

13 to 37 provides a ligand contact to NADP(+); the sequence is LVTGAASGIGYAIVEELASFGAIIH. Position 146 (Ser-146) interacts with substrate. Tyr-159 (proton acceptor) is an active-site residue.

The protein belongs to the short-chain dehydrogenases/reductases (SDR) family. SDR65C subfamily.

In Arabidopsis thaliana (Mouse-ear cress), this protein is Tropinone reductase homolog At2g29310.